Consider the following 342-residue polypeptide: Polycomb group RING finger protein 2 (342 aa).

The RING-type zinc finger occupies cysteine 18–aspartate 57. Residues lysine 51 and lysine 88 each participate in a glycyl lysine isopeptide (Lys-Gly) (interchain with G-Cter in SUMO2) cross-link. A Nuclear localization signal motif is present at residues lysine 81–arginine 95. The residue at position 237 (threonine 237) is a Phosphothreonine; by PKA. The segment at threonine 237–proline 342 is disordered. The span at threonine 243 to alanine 253 shows a compositional bias: polar residues. Residues alanine 263–serine 318 show a composition bias toward low complexity. Polar residues predominate over residues asparagine 319–serine 328. Threonine 334 is modified (phosphothreonine; by PKA).

In terms of assembly, exists as both a monomer and homodimer. Component of a PRC1-like complex. Interacts with CBX8, RING1 and RNF2. Interacts with CBX7. Interacts with PHC2. Phosphorylated. Homodimer formation is regulated by phosphorylation with only unphosphorylated proteins forming homodimers. In terms of tissue distribution, expressed in embryonic stem cells. Expressed in a variety of tumor cells and in neural tissues.

It localises to the nucleus. In terms of biological role, transcriptional repressor. Binds specifically to the DNA sequence 5'-GACTNGACT-3'. Has tumor suppressor activity. May play a role in control of cell proliferation and/or neural cell development. Regulates proliferation of early T progenitor cells by maintaining expression of HES1. Also plays a role in antero-posterior specification of the axial skeleton and negative regulation of the self-renewal activity of hematopoietic stem cells. Component of a Polycomb group (PcG) multiprotein PRC1-like complex, a complex class required to maintain the transcriptionally repressive state of many genes, including Hox genes, throughout development. PcG PRC1 complex acts via chromatin remodeling and modification of histones; it mediates monoubiquitination of histone H2A 'Lys-119', rendering chromatin heritably changed in its expressibility. Within the PRC1-like complex, regulates RNF2 ubiquitin ligase activity. The sequence is that of Polycomb group RING finger protein 2 (Pcgf2) from Mus musculus (Mouse).